We begin with the raw amino-acid sequence, 331 residues long: Glyceraldehyde-3-phosphate dehydrogenase, cytosolic (331 aa).

NAD(+) is bound by residues 12-13 (RI), aspartate 34, and arginine 78. Residues 149 to 151 (SCT), threonine 180, 209 to 210 (TG), and arginine 232 contribute to the D-glyceraldehyde 3-phosphate site. Residue cysteine 150 is the Nucleophile of the active site. Asparagine 314 serves as a coordination point for NAD(+).

This sequence belongs to the glyceraldehyde-3-phosphate dehydrogenase family. In terms of assembly, homotetramer.

The protein localises to the cytoplasm. The enzyme catalyses D-glyceraldehyde 3-phosphate + phosphate + NAD(+) = (2R)-3-phospho-glyceroyl phosphate + NADH + H(+). It functions in the pathway carbohydrate degradation; glycolysis; pyruvate from D-glyceraldehyde 3-phosphate: step 1/5. The chain is Glyceraldehyde-3-phosphate dehydrogenase, cytosolic from Trypanosoma brucei brucei.